The sequence spans 139 residues: Nucleoside diphosphate kinase (139 aa).

ATP is bound by residues K11, F59, R87, T93, R104, and N114. H117 acts as the Pros-phosphohistidine intermediate in catalysis.

Belongs to the NDK family. In terms of assembly, homotetramer. Mg(2+) is required as a cofactor.

Its subcellular location is the cytoplasm. The catalysed reaction is a 2'-deoxyribonucleoside 5'-diphosphate + ATP = a 2'-deoxyribonucleoside 5'-triphosphate + ADP. It catalyses the reaction a ribonucleoside 5'-diphosphate + ATP = a ribonucleoside 5'-triphosphate + ADP. Major role in the synthesis of nucleoside triphosphates other than ATP. The ATP gamma phosphate is transferred to the NDP beta phosphate via a ping-pong mechanism, using a phosphorylated active-site intermediate. In Wolbachia pipientis subsp. Culex pipiens (strain wPip), this protein is Nucleoside diphosphate kinase.